The following is a 499-amino-acid chain: Phenylalanine--tRNA ligase alpha subunit B (499 aa).

L-phenylalanine contacts are provided by residues Thr-330, 373 to 375 (QIE), and Tyr-413. Glu-415 provides a ligand contact to Mg(2+). Phe-439 is an L-phenylalanine binding site.

It belongs to the class-II aminoacyl-tRNA synthetase family. Phe-tRNA synthetase alpha subunit type 2 subfamily. As to quaternary structure, heterotetramer; dimer of two heterodimers formed by alpha and beta subunits. Requires Mg(2+) as cofactor.

It localises to the cytoplasm. The enzyme catalyses tRNA(Phe) + L-phenylalanine + ATP = L-phenylalanyl-tRNA(Phe) + AMP + diphosphate + H(+). The sequence is that of Phenylalanine--tRNA ligase alpha subunit B (farsa-b) from Xenopus laevis (African clawed frog).